A 166-amino-acid polypeptide reads, in one-letter code: Ribosome maturation factor RimP (166 aa).

Belongs to the RimP family.

Its subcellular location is the cytoplasm. Functionally, required for maturation of 30S ribosomal subunits. This Psychrobacter cryohalolentis (strain ATCC BAA-1226 / DSM 17306 / VKM B-2378 / K5) protein is Ribosome maturation factor RimP.